A 190-amino-acid chain; its full sequence is Crossover junction endodeoxyribonuclease RuvC (190 aa).

Catalysis depends on residues Asp8, Glu67, and Asp139. Residues Asp8, Glu67, and Asp139 each contribute to the Mg(2+) site.

It belongs to the RuvC family. In terms of assembly, homodimer which binds Holliday junction (HJ) DNA. The HJ becomes 2-fold symmetrical on binding to RuvC with unstacked arms; it has a different conformation from HJ DNA in complex with RuvA. In the full resolvosome a probable DNA-RuvA(4)-RuvB(12)-RuvC(2) complex forms which resolves the HJ. Requires Mg(2+) as cofactor.

It localises to the cytoplasm. The catalysed reaction is Endonucleolytic cleavage at a junction such as a reciprocal single-stranded crossover between two homologous DNA duplexes (Holliday junction).. Functionally, the RuvA-RuvB-RuvC complex processes Holliday junction (HJ) DNA during genetic recombination and DNA repair. Endonuclease that resolves HJ intermediates. Cleaves cruciform DNA by making single-stranded nicks across the HJ at symmetrical positions within the homologous arms, yielding a 5'-phosphate and a 3'-hydroxyl group; requires a central core of homology in the junction. The consensus cleavage sequence is 5'-(A/T)TT(C/G)-3'. Cleavage occurs on the 3'-side of the TT dinucleotide at the point of strand exchange. HJ branch migration catalyzed by RuvA-RuvB allows RuvC to scan DNA until it finds its consensus sequence, where it cleaves and resolves the cruciform DNA. This chain is Crossover junction endodeoxyribonuclease RuvC, found in Haemophilus influenzae (strain ATCC 51907 / DSM 11121 / KW20 / Rd).